Here is an 89-residue protein sequence, read N- to C-terminus: MAISKEKKQEIIAQYARKEGDTGSPEVQIAVLTWEINHLNDHIKSHKKDHATQRGLMKKIGHRRNLLGYLRGKDVQRYRELIASLGLRR.

It belongs to the universal ribosomal protein uS15 family. Part of the 30S ribosomal subunit. Forms a bridge to the 50S subunit in the 70S ribosome, contacting the 23S rRNA.

Functionally, one of the primary rRNA binding proteins, it binds directly to 16S rRNA where it helps nucleate assembly of the platform of the 30S subunit by binding and bridging several RNA helices of the 16S rRNA. In terms of biological role, forms an intersubunit bridge (bridge B4) with the 23S rRNA of the 50S subunit in the ribosome. The protein is Small ribosomal subunit protein uS15 of Lactococcus lactis subsp. lactis (strain IL1403) (Streptococcus lactis).